The sequence spans 110 residues: uncharacterized protein (110 aa).

This is an uncharacterized protein from Acidianus convivator (ABV).